Reading from the N-terminus, the 326-residue chain is Putative ribose-phosphate pyrophosphokinase 2 (326 aa).

Residues D43–E45 and R102–Q103 contribute to the ATP site. Residue H136 participates in Mg(2+) binding. Residues D225 and N229–T233 contribute to the D-ribose 5-phosphate site.

Homohexamer. Mg(2+) serves as cofactor.

The protein resides in the cytoplasm. The catalysed reaction is D-ribose 5-phosphate + ATP = 5-phospho-alpha-D-ribose 1-diphosphate + AMP + H(+). It participates in metabolic intermediate biosynthesis; 5-phospho-alpha-D-ribose 1-diphosphate biosynthesis; 5-phospho-alpha-D-ribose 1-diphosphate from D-ribose 5-phosphate (route I): step 1/1. In terms of biological role, involved in the biosynthesis of the central metabolite phospho-alpha-D-ribosyl-1-pyrophosphate (PRPP) via the transfer of pyrophosphoryl group from ATP to 1-hydroxyl of ribose-5-phosphate (Rib-5-P). The protein is Putative ribose-phosphate pyrophosphokinase 2 of Streptococcus pyogenes serotype M6 (strain ATCC BAA-946 / MGAS10394).